A 213-amino-acid chain; its full sequence is TVP38/TMEM64 family membrane protein YtxB (213 aa).

6 consecutive transmembrane segments (helical) span residues 9–29, 34–54, 58–78, 81–101, 159–179, and 181–201; these read WLAVLAGAGLLYWGNKTYLNV, IRVWVLSFGVFAPLMFIGISI, LVLFPVSVISIAGGLAFGPLL, LYTLFGSMCASAVSFFAAGLF, AVGIIPGTIALNVLGASFLAG, and LPAFFMVLALYIVFISLPFIF.

Belongs to the TVP38/TMEM64 family.

The protein resides in the cell membrane. The protein is TVP38/TMEM64 family membrane protein YtxB (ytxB) of Bacillus subtilis (strain 168).